We begin with the raw amino-acid sequence, 488 residues long: 3-octaprenyl-4-hydroxybenzoate carboxy-lyase (488 aa).

Asn-172 is a binding site for Mn(2+). Prenylated FMN is bound by residues 175 to 177 (IYR), 189 to 191 (RWL), and 194 to 195 (RG). Glu-238 serves as a coordination point for Mn(2+). Asp-287 (proton donor) is an active-site residue.

Belongs to the UbiD family. In terms of assembly, homohexamer. Prenylated FMN serves as cofactor. It depends on Mn(2+) as a cofactor.

Its subcellular location is the cell membrane. The enzyme catalyses a 4-hydroxy-3-(all-trans-polyprenyl)benzoate + H(+) = a 2-(all-trans-polyprenyl)phenol + CO2. It functions in the pathway cofactor biosynthesis; ubiquinone biosynthesis. In terms of biological role, catalyzes the decarboxylation of 3-octaprenyl-4-hydroxy benzoate to 2-octaprenylphenol, an intermediate step in ubiquinone biosynthesis. In Pseudomonas paraeruginosa (strain DSM 24068 / PA7) (Pseudomonas aeruginosa (strain PA7)), this protein is 3-octaprenyl-4-hydroxybenzoate carboxy-lyase.